A 465-amino-acid chain; its full sequence is UDP-N-acetylmuramate--L-alanine ligase (465 aa).

112 to 118 (GTHGKTT) contacts ATP.

Belongs to the MurCDEF family.

It is found in the cytoplasm. The catalysed reaction is UDP-N-acetyl-alpha-D-muramate + L-alanine + ATP = UDP-N-acetyl-alpha-D-muramoyl-L-alanine + ADP + phosphate + H(+). Its pathway is cell wall biogenesis; peptidoglycan biosynthesis. Its function is as follows. Cell wall formation. The polypeptide is UDP-N-acetylmuramate--L-alanine ligase (Burkholderia lata (strain ATCC 17760 / DSM 23089 / LMG 22485 / NCIMB 9086 / R18194 / 383)).